We begin with the raw amino-acid sequence, 368 residues long: MARERRDSKAATFFCLAWALCLALPGFPQHVSGREDRVDWTQEKYSHRPTILNATCILQVTSQTNVNRMWQNDLHPILIERYPGSPGSYAVRQHIKHRLQGLQAGWLVEEDTFQSHTPYGYRTFSNIISTLNPLAKRHLVIACHYDSKYFPPQLDGKVFVGATDSAVPCAMMLELARSLDRQLSFLKQSSLPPKADLSLKLIFFDGEEAFVRWSPSDSLYGSRSLAQKMASTPHPPGARNTYQIQGIDLFVLLDLIGARNPVFPVYFLNTARWFGRLEAIEQNLYDLGLLNNYSSERQYFRSNLRRHPVEDDHIPFLRRGVPILHLIPSPFPRVWHTMEDNEENLDKPTIDNLSKILQVFVLEYLNLG.

The N-terminal stretch at 1 to 33 (MARERRDSKAATFFCLAWALCLALPGFPQHVSG) is a signal peptide. N-linked (GlcNAc...) asparagine glycosylation is present at Asn53. A disulfide bond links Cys143 and Cys169. Residue Asp164 participates in Zn(2+) binding. Residue Glu207 is the Proton acceptor of the active site. A Zn(2+)-binding site is contributed by Glu208. Asp254 (proton acceptor) is an active-site residue. N-linked (GlcNAc...) asparagine glycosylation occurs at Asn292. His336 is a binding site for Zn(2+). Asn352 is a glycosylation site (N-linked (GlcNAc...) asparagine).

This sequence belongs to the glutaminyl-peptide cyclotransferase family. As to expression, expressed by the venom gland.

It localises to the secreted. It carries out the reaction N-terminal L-glutaminyl-[peptide] = N-terminal 5-oxo-L-prolyl-[peptide] + NH4(+). In terms of biological role, responsible for the biosynthesis of pyroglutamyl peptides. Has a bias against acidic and tryptophan residues adjacent to the N-terminal glutaminyl residue and a lack of importance of chain length after the second residue. Also catalyzes N-terminal pyroglutamate formation. The polypeptide is Glutaminyl-peptide cyclotransferase (QPCT) (Gloydius blomhoffii (Mamushi)).